Here is a 335-residue protein sequence, read N- to C-terminus: Thioredoxin reductase (335 aa).

Residues 22–25 (SGPA), 44–51 (EGTSFGGA), N60, and V93 contribute to the FAD site. A disulfide bridge links C145 with C148. NADP(+) is bound by residues S166, H185, R191, I248, and Y268. FAD-binding positions include D288 and 295 to 298 (RQAV). Residue R295 participates in NADP(+) binding.

Belongs to the class-II pyridine nucleotide-disulfide oxidoreductase family. Homodimer. It depends on FAD as a cofactor.

It localises to the cytoplasm. It catalyses the reaction [thioredoxin]-dithiol + NADP(+) = [thioredoxin]-disulfide + NADPH + H(+). This Mycobacterium tuberculosis (strain CDC 1551 / Oshkosh) protein is Thioredoxin reductase.